Reading from the N-terminus, the 553-residue chain is Expansin-like protein 7 (553 aa).

Residues Met1 to Ser19 form the signal peptide. Asn39 carries an N-linked (GlcNAc...) asparagine glycan. The Expansin-like EG45 domain occupies Ser41 to Pro139. Cystine bridges form between Cys44/Cys73 and Cys76/Cys134. Residues Asn276, Asn325, and Asn406 are each glycosylated (N-linked (GlcNAc...) asparagine). Disordered regions lie at residues Gly421–Ala447 and Ser460–His531. 2 stretches are compositionally biased toward low complexity: residues Ser460–Lys476 and Ile484–Gly493. Residues Ala497–Gly516 are compositionally biased toward polar residues. Residues Asp520 to His531 show a composition bias toward basic and acidic residues.

This sequence belongs to the expansin family. Expansin A subfamily.

It is found in the secreted. Functionally, may serve to lubricate the movement of the cellulose microfibrils during cell growth and wall extension and/or may serve to maintain the fluid state of the slug cell wall. Overexpression shows aberrant stalk formation. The sequence is that of Expansin-like protein 7 (expl7) from Dictyostelium discoideum (Social amoeba).